Here is a 632-residue protein sequence, read N- to C-terminus: Chaperone protein DnaK (632 aa).

Thr199 bears the Phosphothreonine; by autocatalysis mark. Positions 597–611 are enriched in low complexity; that stretch reads AAQQAGQAEGQAAQE. The tract at residues 597-632 is disordered; the sequence is AAQQAGQAEGQAAQEPSQSTGNAQAEATDAEYEEVK. Residues 612 to 621 show a composition bias toward polar residues; that stretch reads PSQSTGNAQA.

Belongs to the heat shock protein 70 family.

In terms of biological role, acts as a chaperone. This is Chaperone protein DnaK from Amoebophilus asiaticus (strain 5a2).